Here is a 131-residue protein sequence, read N- to C-terminus: Meiotically up-regulated gene 115 protein (131 aa).

The protein resides in the mitochondrion. It is found in the nucleus. Has a role in meiosis. In Schizosaccharomyces pombe (strain 972 / ATCC 24843) (Fission yeast), this protein is Meiotically up-regulated gene 115 protein (mug115).